Here is a 222-residue protein sequence, read N- to C-terminus: Uridine diphosphate glucose pyrophosphatase NUDT14 (222 aa).

One can recognise a Nudix hydrolase domain in the interval 38 to 206 (KTHDSVTVLL…DIPKTLGVIF (169 aa)). The Nudix box signature appears at 111-129 (PGLSLEEVACKEAWEECGY).

It belongs to the Nudix hydrolase family. Homodimer. Requires Mg(2+) as cofactor.

It localises to the cytoplasm. The enzyme catalyses UDP-sugar + H2O = UMP + alpha-D-aldose 1-phosphate.. Hydrolyzes UDP-glucose to glucose 1-phosphate and UMP and ADP-ribose to ribose 5-phosphate and AMP. The physiological substrate is probably UDP-glucose. Poor activity on other substrates such as ADP-glucose, CDP-glucose, GDP-glucose and GDP-mannose. The polypeptide is Uridine diphosphate glucose pyrophosphatase NUDT14 (NUDT14) (Homo sapiens (Human)).